Here is a 71-residue protein sequence, read N- to C-terminus: Conotoxin Pl071 (71 aa).

The signal sequence occupies residues 1 to 20; it reads MSRLFMILLVICVITLGTDA. The propeptide occupies 21 to 31; that stretch reads SQAEDSGTEKR. Tyrosine amide is present on tyrosine 69.

The protein belongs to the conotoxin NSf-1 superfamily. As to expression, expressed by the venom duct.

It localises to the secreted. Probable neurotoxin with unknown target. Possibly targets ion channels. This Conus planorbis (Planorbis cone) protein is Conotoxin Pl071.